Consider the following 681-residue polypeptide: Potassium-transporting ATPase ATP-binding subunit (681 aa).

A run of 4 helical transmembrane segments spans residues 30 to 50 (LLVY…FFGI), 59 to 79 (LAIA…EAIA), 216 to 236 (ILLV…LPFT), and 255 to 275 (IALL…SIGI). Asp306 functions as the 4-aspartylphosphate intermediate in the catalytic mechanism. ATP contacts are provided by residues Asp343, Glu347, 376–383 (FTATTRMS), and Lys394. Mg(2+) contacts are provided by Asp517 and Asp521. Helical transmembrane passes span 587-607 (FAII…LNLM), 615-635 (AILS…PLSL), and 661-681 (LIAP…LGIV).

Belongs to the cation transport ATPase (P-type) (TC 3.A.3) family. Type IA subfamily. As to quaternary structure, the system is composed of three essential subunits: KdpA, KdpB and KdpC.

The protein resides in the cell membrane. It carries out the reaction K(+)(out) + ATP + H2O = K(+)(in) + ADP + phosphate + H(+). Part of the high-affinity ATP-driven potassium transport (or Kdp) system, which catalyzes the hydrolysis of ATP coupled with the electrogenic transport of potassium into the cytoplasm. This subunit is responsible for energy coupling to the transport system and for the release of the potassium ions to the cytoplasm. This Listeria monocytogenes serotype 4a (strain HCC23) protein is Potassium-transporting ATPase ATP-binding subunit.